Reading from the N-terminus, the 118-residue chain is Small ribosomal subunit protein uS13 (118 aa).

The disordered stretch occupies residues 92 to 118; the sequence is KKHLPVRGQRTKTNARTRKGPRKPIKK.

The protein belongs to the universal ribosomal protein uS13 family. As to quaternary structure, part of the 30S ribosomal subunit. Forms a loose heterodimer with protein S19. Forms two bridges to the 50S subunit in the 70S ribosome.

Located at the top of the head of the 30S subunit, it contacts several helices of the 16S rRNA. In the 70S ribosome it contacts the 23S rRNA (bridge B1a) and protein L5 of the 50S subunit (bridge B1b), connecting the 2 subunits; these bridges are implicated in subunit movement. Contacts the tRNAs in the A and P-sites. This chain is Small ribosomal subunit protein uS13, found in Wigglesworthia glossinidia brevipalpis.